The following is a 317-amino-acid chain: Carbonic anhydrase 5B, mitochondrial (317 aa).

Residues Met1 to Ser33 constitute a mitochondrion transit peptide. In terms of domain architecture, Alpha-carbonic anhydrase spans Tyr37 to Phe296. Zn(2+) is bound by residues His130, His132, and His155. Substrate is bound at residue Thr235–Thr236.

This sequence belongs to the alpha-carbonic anhydrase family. Zn(2+) is required as a cofactor.

The protein localises to the mitochondrion. It catalyses the reaction hydrogencarbonate + H(+) = CO2 + H2O. Functionally, mitochondrial carbonic anhydrase that catalyzes the reversible conversion of carbon dioxide to bicarbonate/HCO3. The sequence is that of Carbonic anhydrase 5B, mitochondrial (Ca5b) from Rattus norvegicus (Rat).